A 472-amino-acid chain; its full sequence is UDP-glycosyltransferase 708G2 (472 aa).

The Proton acceptor role is filled by His-23. Position 23 (His-23) interacts with an anthocyanidin. The active-site Charge relay is Asp-117. Position 140 (Thr-140) interacts with UDP-alpha-D-glucose. The segment at 283–284 (SR) is UDP. 7 residues coordinate UDP-alpha-D-glucose: Val-346, Gln-348, His-363, Trp-366, Asn-367, Ser-368, and Glu-371. Gly-386 contributes to the an anthocyanidin binding site. Positions 387 and 388 each coordinate UDP-alpha-D-glucose.

It belongs to the UDP-glycosyltransferase family. Expressed at low levels in leaves, flowers and immature leaves.

It carries out the reaction a 3'-hydro-2'-hydroxy-beta-oxodihydrochalcone + UDP-alpha-D-glucose = a 3'-(beta-D-glucopyranosyl)-2'-hydroxy-beta-oxodihydrochalcone + UDP + H(+). UDP-glucose-dependent glucosyltransferase catalyzing the C-glucosylation of 2-hydroxyflavanones (2-hydroxylnaringenin and 2-hydroxypinocembrin) and phloretin. No activity with flavanones, flavones or flavonols. Exhibits C-glucosylation activity toward 2-phenyl-2',4',6'-trihydroxyacetophenone. Can use UDP-xylose as sugar donor, but catalytic efficiency is much lower toward UDP-xylose than toward UDP-glucose. This is UDP-glycosyltransferase 708G2 (UGT708G2) from Citrus unshiu (Satsuma mandarin).